Reading from the N-terminus, the 407-residue chain is Proteasome-activating nucleotidase (407 aa).

The stretch at 22 to 67 forms a coiled coil; that stretch reads KEKTQIAELESKVLRLELKNKDVTRENVQIKKENEILKRELDKLRI. Residues 192–197 and His-331 contribute to the ATP site; that span reads GTGKTL. The segment at 405–407 is docks into pockets in the proteasome alpha-ring to cause gate opening; that stretch reads MYG.

This sequence belongs to the AAA ATPase family. As to quaternary structure, homohexamer. The hexameric complex has a two-ring architecture resembling a top hat that caps the 20S proteasome core at one or both ends. Upon ATP-binding, the C-terminus of PAN interacts with the alpha-rings of the proteasome core by binding to the intersubunit pockets.

The protein localises to the cytoplasm. Its function is as follows. ATPase which is responsible for recognizing, binding, unfolding and translocation of substrate proteins into the archaeal 20S proteasome core particle. Is essential for opening the gate of the 20S proteasome via an interaction with its C-terminus, thereby allowing substrate entry and access to the site of proteolysis. Thus, the C-termini of the proteasomal ATPase function like a 'key in a lock' to induce gate opening and therefore regulate proteolysis. Unfolding activity requires energy from ATP hydrolysis, whereas ATP binding alone promotes ATPase-20S proteasome association which triggers gate opening, and supports translocation of unfolded substrates. This chain is Proteasome-activating nucleotidase, found in Methanococcus maripaludis (strain C7 / ATCC BAA-1331).